The primary structure comprises 107 residues: Ig kappa chain V-VI region TEPC 601/TEPC 191 (107 aa).

The tract at residues 1–23 (EIVLTQSPAITAASLGQKVTITC) is framework-1. A disulfide bridge links C23 with C87. The complementarity-determining-1 stretch occupies residues 24–33 (SASSSVSYMH). The segment at 34–48 (WYQQKSGTSPKPWIY) is framework-2. The interval 49 to 55 (EISKLAS) is complementarity-determining-2. Residues 56–87 (GVPARFSGSGSGTSYSLTISSMEAEDAAIYYC) are framework-3. Residues 88-96 (QQWNYPLIT) form a complementarity-determining-3 region. The tract at residues 97-106 (FGAGTKLELK) is framework-4.

The polypeptide is Ig kappa chain V-VI region TEPC 601/TEPC 191 (Mus musculus (Mouse)).